We begin with the raw amino-acid sequence, 411 residues long: UDP-N-acetylmuramoylalanine--D-glutamate ligase (411 aa).

92–98 (GTDGKST) serves as a coordination point for ATP.

This sequence belongs to the MurCDEF family.

It localises to the cytoplasm. The enzyme catalyses UDP-N-acetyl-alpha-D-muramoyl-L-alanine + D-glutamate + ATP = UDP-N-acetyl-alpha-D-muramoyl-L-alanyl-D-glutamate + ADP + phosphate + H(+). It participates in cell wall biogenesis; peptidoglycan biosynthesis. In terms of biological role, cell wall formation. Catalyzes the addition of glutamate to the nucleotide precursor UDP-N-acetylmuramoyl-L-alanine (UMA). This is UDP-N-acetylmuramoylalanine--D-glutamate ligase from Hydrogenobaculum sp. (strain Y04AAS1).